Here is a 272-residue protein sequence, read N- to C-terminus: Putative hydro-lyase AZC_4080 (272 aa).

The protein belongs to the D-glutamate cyclase family.

The chain is Putative hydro-lyase AZC_4080 from Azorhizobium caulinodans (strain ATCC 43989 / DSM 5975 / JCM 20966 / LMG 6465 / NBRC 14845 / NCIMB 13405 / ORS 571).